The following is a 402-amino-acid chain: Hyaluronan and proteoglycan link protein 4 (402 aa).

Residues 1-29 form the signal peptide; it reads MVCARAALGPGALWAAAWGVLLLTAPAGA. An Ig-like C2-type domain is found at 46–161; that stretch reads SVVVQTAPGQ…DAGMVKLDLE (116 aa). 5 cysteine pairs are disulfide-bonded: cysteine 68–cysteine 143, cysteine 185–cysteine 266, cysteine 209–cysteine 230, cysteine 293–cysteine 363, and cysteine 318–cysteine 339. An N-linked (GlcNAc...) asparagine glycan is attached at asparagine 132. 2 consecutive Link domains span residues 163–268 and 273–365; these read VVFP…FCFT and GRVF…YCYR.

This sequence belongs to the HAPLN family. As to expression, expressed predominantly in brain.

It localises to the secreted. The protein resides in the extracellular space. Its subcellular location is the extracellular matrix. Its function is as follows. Essential for the proper localization of brevican (BCAN), mainly as a perineuronal nets (PNNs)-type deposition in the brainstem and cerebellum thereby playing a key role in the formation and structural organization of PNNs. Contributes to the formation and transmission of inhibitory GABAergic synapses between Purkinje cells and deep cerebellar nuclei neurons. In Homo sapiens (Human), this protein is Hyaluronan and proteoglycan link protein 4 (HAPLN4).